Reading from the N-terminus, the 94-residue chain is Small ubiquitin-related modifier 3-like (94 aa).

Lys-11 is covalently cross-linked (Glycyl lysine isopeptide (Lys-Gly) (interchain with G-Cter in SUMO)). The Ubiquitin-like domain maps to 15 to 92; that stretch reads DHINLKVAGQ…IDVFQQQTGG (78 aa). Residue Gly-92 forms a Glycyl lysine isopeptide (Gly-Lys) (interchain with K-? in acceptor proteins) linkage. A propeptide spanning residues 93-94 is cleaved from the precursor; that stretch reads SC.

The protein belongs to the ubiquitin family. SUMO subfamily. As to quaternary structure, interacts with sae2 and ube2i. Covalently attached to a number of proteins. Post-translationally, polymeric chains can be formed through Lys-11 cross-linking. In terms of processing, cleavage of precursor form by a sentrin-specific protease is necessary for function.

It is found in the cytoplasm. Its subcellular location is the nucleus. It localises to the PML body. Functionally, ubiquitin-like protein which can be covalently attached to target lysines either as a monomer or as a lysine-linked polymer. Does not seem to be involved in protein degradation and may function as an antagonist of ubiquitin in the degradation process. Plays a role in a number of cellular processes such as nuclear transport, DNA replication and repair, mitosis and signal transduction. Covalent attachment to its substrates requires prior activation by the E1 complex sae1-sae2 and linkage to the E2 enzyme ube2i. The protein is Small ubiquitin-related modifier 3-like (sumo3l) of Danio rerio (Zebrafish).